A 420-amino-acid chain; its full sequence is Argininosuccinate synthase (420 aa).

Residue 11-19 (AFSGGLDTT) coordinates ATP. Tyr-88 is an L-citrulline binding site. Gly-118 contributes to the ATP binding site. Thr-120, Asn-124, and Asp-125 together coordinate L-aspartate. L-citrulline is bound at residue Asn-124. Arg-128, Ser-174, Ser-183, Glu-257, and Tyr-269 together coordinate L-citrulline. Residues 401-420 (KGAAVTDGSGDHAASEDTEE) are disordered. Positions 409–420 (SGDHAASEDTEE) are enriched in basic and acidic residues.

Belongs to the argininosuccinate synthase family. Type 1 subfamily. As to quaternary structure, homotetramer.

The protein resides in the cytoplasm. The enzyme catalyses L-citrulline + L-aspartate + ATP = 2-(N(omega)-L-arginino)succinate + AMP + diphosphate + H(+). It functions in the pathway amino-acid biosynthesis; L-arginine biosynthesis; L-arginine from L-ornithine and carbamoyl phosphate: step 2/3. The sequence is that of Argininosuccinate synthase from Haloarcula marismortui (strain ATCC 43049 / DSM 3752 / JCM 8966 / VKM B-1809) (Halobacterium marismortui).